The sequence spans 238 residues: 7-cyano-7-deazaguanine synthase (238 aa).

15–25 (FSGGQDSTTCL) is an ATP binding site. Zn(2+)-binding residues include Cys-203, Cys-218, Cys-221, and Cys-224.

This sequence belongs to the QueC family. Requires Zn(2+) as cofactor.

It catalyses the reaction 7-carboxy-7-deazaguanine + NH4(+) + ATP = 7-cyano-7-deazaguanine + ADP + phosphate + H2O + H(+). It participates in purine metabolism; 7-cyano-7-deazaguanine biosynthesis. Catalyzes the ATP-dependent conversion of 7-carboxy-7-deazaguanine (CDG) to 7-cyano-7-deazaguanine (preQ(0)). The chain is 7-cyano-7-deazaguanine synthase from Alkalilimnicola ehrlichii (strain ATCC BAA-1101 / DSM 17681 / MLHE-1).